A 941-amino-acid polypeptide reads, in one-letter code: Cilia- and flagella-associated protein 69 (941 aa).

A compositionally biased stretch (low complexity) spans 1–14; the sequence is MWTEEAGATAEAQE. The interval 1–26 is disordered; that stretch reads MWTEEAGATAEAQESGIRNKSSSSSQ. The segment covering 16-26 has biased composition (polar residues); sequence GIRNKSSSSSQ.

In terms of tissue distribution, highly expressed in the testis, specifically in sperm (at protein level). Expressed in the brain, kidney, liver, lung, and intestine.

It localises to the cell projection. It is found in the cilium. The protein localises to the flagellum. Its function is as follows. Cilium- and flagellum-associated protein. In the olfactory epithelium, regulates the speed of activation and termination of the odor response and thus contributes to the robustness of olfactory transduction pathways. Required for sperm flagellum assembly and stability. This is Cilia- and flagella-associated protein 69 from Homo sapiens (Human).